Here is a 351-residue protein sequence, read N- to C-terminus: Small ribosomal subunit biogenesis GTPase RsgA 1 (351 aa).

A CP-type G domain is found at 100-258 (LRTDAQIVAS…IIDTPGMREL (159 aa)). Residues 148 to 151 (SKVD) and 200 to 208 (GSSGAGKST) contribute to the GTP site. Residues Cys282, Cys287, His289, and Cys295 each coordinate Zn(2+).

It belongs to the TRAFAC class YlqF/YawG GTPase family. RsgA subfamily. In terms of assembly, monomer. Associates with 30S ribosomal subunit, binds 16S rRNA. Zn(2+) serves as cofactor.

The protein localises to the cytoplasm. In terms of biological role, one of several proteins that assist in the late maturation steps of the functional core of the 30S ribosomal subunit. Helps release RbfA from mature subunits. May play a role in the assembly of ribosomal proteins into the subunit. Circularly permuted GTPase that catalyzes slow GTP hydrolysis, GTPase activity is stimulated by the 30S ribosomal subunit. In Oceanobacillus iheyensis (strain DSM 14371 / CIP 107618 / JCM 11309 / KCTC 3954 / HTE831), this protein is Small ribosomal subunit biogenesis GTPase RsgA 1.